Reading from the N-terminus, the 702-residue chain is MSTDAELQTISGLSVASKSAPSTQTEGVTASGKVESTTNAEEATSDVEEEENPLVVAARDGNTAEVKRLCESGSYSVLDTAEDGVTALHWAAVNNRISTCQYLVEQGAVVDAKGGQLNGTPLHWACRRGLVYIVHYLIQNGADPLRSDVQGYNALHLATHSSNVMLLVYLLHQGLPVDCQDPNGRTALHWAAYQGDALSVDVLLRWGSDVKITDTQGFLPLHWGIVNGSRNSLARLIEEGSDMYAKSSDGKTPHVMAAEMNTTAQLEGALDDCGRFPDGSQKTKYFDARTTNLLCFFTPFILILLGLVLCTFCGPIFGIILTVATLFGSIKLLKTLVLPSLYNGHAALLKSPFQAGIFTGSAFWVTVKYLTSVLPATFASHPILNFFFASIFGLAMYCFFRCMSMDPGYIPKLSGITEQKEVIETLIERGEFDTRHFCFVTYVRKPLRSKFCRQSKRVVARFDHFCPWVWNAIGVRNHRMFVLYVLFLQIGIPLWLALNSAYFGELLEIKRWDPLEFYLVIWISLQLIWITFLSFVQIFQICRSLTTSEAVNLQKYGYMGADDYSSVPLDHSAATASAKSVMNAHGHAAKSPCFSSVLKLLGVDQFVATAGEAIKHRDNRSWKEKNPTDSGAGTNCFDFWFPNGKFDLLAVFEAGKGGGAIGGHAVDYYKLWDFPDVSPNQQQTNNRSTREDGEALLAESQV.

Residues 1 to 40 (MSTDAELQTISGLSVASKSAPSTQTEGVTASGKVESTTNA) show a composition bias toward polar residues. The interval 1–51 (MSTDAELQTISGLSVASKSAPSTQTEGVTASGKVESTTNAEEATSDVEEEE) is disordered. Over 1 to 299 (MSTDAELQTI…TTNLLCFFTP (299 aa)) the chain is Cytoplasmic. ANK repeat units lie at residues 49-80 (EEENPLVVAARDGNTAEVKRLCESGSYSVLDT), 83-112 (DGVTALHWAAVNNRISTCQYLVEQGAVVDA), 117-147 (LNGTPLHWACRRGLVYIVHYLIQNGADPLRS), 150-179 (QGYNALHLATHSSNVMLLVYLLHQGLPVDC), 183-212 (NGRTALHWAAYQGDALSVDVLLRWGSDVKI), and 216-245 (QGFLPLHWGIVNGSRNSLARLIEEGSDMYA). 2 consecutive transmembrane segments (helical) span residues 300-320 (FILILLGLVLCTFCGPIFGII) and 321-341 (LTVATLFGSIKLLKTLVLPSL). Residues 342–354 (YNGHAALLKSPFQ) are Cytoplasmic-facing. Residues 355–375 (AGIFTGSAFWVTVKYLTSVLP) form a helical membrane-spanning segment. At 376 to 379 (ATFA) the chain is on the lumenal side. A helical membrane pass occupies residues 380–400 (SHPILNFFFASIFGLAMYCFF). Residues 401-479 (RCMSMDPGYI…WNAIGVRNHR (79 aa)) are Cytoplasmic-facing. One can recognise a DHHC domain in the interval 436–486 (HFCFVTYVRKPLRSKFCRQSKRVVARFDHFCPWVWNAIGVRNHRMFVLYVL). Cys-466 functions as the S-palmitoyl cysteine intermediate in the catalytic mechanism. The chain crosses the membrane as a helical span at residues 480–500 (MFVLYVLFLQIGIPLWLALNS). At 501-518 (AYFGELLEIKRWDPLEFY) the chain is on the lumenal side. The chain crosses the membrane as a helical span at residues 519–539 (LVIWISLQLIWITFLSFVQIF). The Cytoplasmic segment spans residues 540–702 (QICRSLTTSE…GEALLAESQV (163 aa)). Positions 679–702 (PNQQQTNNRSTREDGEALLAESQV) are disordered.

Belongs to the DHHC palmitoyltransferase family. AKR/ZDHHC17 subfamily.

It localises to the early endosome membrane. Its subcellular location is the golgi apparatus membrane. It carries out the reaction L-cysteinyl-[protein] + hexadecanoyl-CoA = S-hexadecanoyl-L-cysteinyl-[protein] + CoA. Its function is as follows. Palmitoyltransferase specific for casein kinase 1. The polypeptide is Palmitoyltransferase AKR1 (AKR1) (Yarrowia lipolytica (strain CLIB 122 / E 150) (Yeast)).